A 732-amino-acid polypeptide reads, in one-letter code: Conidiogenone synthase (732 aa).

Positions 1 to 311 (MADKITDEYA…SLCVPRYCKV (311 aa)) are terpene cyclase. Asp-97 contacts Mg(2+). Substrate-binding positions include Asp-97, 169–172 (RIVD), Asn-213, 217–221 (SWDKE), and 307–308 (RY). Positions 97 to 101 (DALNQ) match the DDXXD 1 motif. The NSE/DTE signature appears at 213–221 (NDLFSWDKE). A prenyltransferase region spans residues 312-732 (DRNPYKDHLE…LRAMEETLQK (421 aa)). The tract at residues 348–370 (KQSELKDPSSSTYKSHFSPLEPN) is disordered. Lys-402, Arg-405, and His-434 together coordinate isopentenyl diphosphate. The Mg(2+) site is built by Asp-441 and Asp-445. The DDXXD 2 signature appears at 441–445 (DDIQD). Arg-450 contacts dimethylallyl diphosphate. Arg-451 lines the isopentenyl diphosphate pocket. Dimethylallyl diphosphate-binding residues include Lys-529, Thr-530, Gln-565, Asn-572, Lys-582, and Lys-592.

It in the N-terminal section; belongs to the terpene synthase family. The protein in the C-terminal section; belongs to the FPP/GGPP synthase family. As to quaternary structure, hexamer. Mg(2+) serves as cofactor.

It carries out the reaction isopentenyl diphosphate + (2E,6E)-farnesyl diphosphate = (2E,6E,10E)-geranylgeranyl diphosphate + diphosphate. It functions in the pathway secondary metabolite biosynthesis; terpenoid biosynthesis. Its function is as follows. Bifunctional terpene synthase; part of the gene cluster that mediates the biosynthesis of conidiogenone, a diterpene known to induce the conidiation. The bifunctional terpene synthase PchDS converts isopentenyl diphosphate (IPP) and dimethylallyl diphosphate (DMAPP) into deoxyconidiogenol. The C-terminal prenyltransferase (PT) domain of PchDS catalyzes formation of GGPP, whereas the N-terminal terpene cyclase (TC) domain catalyzes the cyclization of GGPP into deoxyconidiogenol. The cytochrome P450 monooxygenase PchP450 then catalyzes two rounds of oxidation to furnish conidiogenone. The protein is Conidiogenone synthase of Penicillium rubens (strain ATCC 28089 / DSM 1075 / NRRL 1951 / Wisconsin 54-1255) (Penicillium chrysogenum).